A 277-amino-acid polypeptide reads, in one-letter code: MFPAMLNVGLGLRRGLLPELLAMEAGAVDFLECAPENWIAVGGAYGKGLAQLAERFAVTCHGLSLSLGGSAPLDRHFLEQTRQFLDRYQVRLYSEHLSYCSDDGHLYDLMPIPFTDEAVRHVAARIRQAQEQLERRIAVENISYYAAPYQAMSELDFIQAVLEEADCDLLLDVNNVYVNACNHGYDAQQFLAGLPQARVAGMHVAGHYDEAPDLKVDTHGAAVKEDVWALYASACARFGVQPTVLERDFNYPPLAELLAETARMRAVQCAAGGQADE.

It belongs to the UPF0276 family.

This chain is UPF0276 protein PP_2398, found in Pseudomonas putida (strain ATCC 47054 / DSM 6125 / CFBP 8728 / NCIMB 11950 / KT2440).